The sequence spans 462 residues: GTPase Der (462 aa).

EngA-type G domains lie at Lys9–Gln171 and Ile201–Ser372. Residues Gly15–Ser22, Asp62–Met66, Asn123–Asp126, Gly207–Ser214, Asp254–Ile258, and Asn318–Asp321 contribute to the GTP site. In terms of domain architecture, KH-like spans Lys373 to Lys457.

The protein belongs to the TRAFAC class TrmE-Era-EngA-EngB-Septin-like GTPase superfamily. EngA (Der) GTPase family. As to quaternary structure, associates with the 50S ribosomal subunit.

Functionally, GTPase that plays an essential role in the late steps of ribosome biogenesis. The chain is GTPase Der from Helicobacter pylori (strain P12).